The sequence spans 129 residues: Ropporin-1 (129 aa).

The region spanning 11–34 (PELPELLKTQPPDLIQWAAEYFGA) is the RIIa domain.

It belongs to the ropporin family. As to quaternary structure, homodimer. Interacts with AKAP3. May interact with SPA17. Interacts with RHPN1. Interacts with FSCB; the interaction increases upon spermatozoa capacitation conditions. Interacts with CFAP61. In terms of processing, sumoylated, sumoylation decreases upon spermatozoa capacitation conditions.

It localises to the cell projection. The protein resides in the cilium. The protein localises to the flagellum. Its function is as follows. Important for male fertility. With ROPN1L, involved in fibrous sheath integrity and sperm motility, plays a role in PKA-dependent signaling processes required for spermatozoa capacitation. This Mesocricetus auratus (Golden hamster) protein is Ropporin-1.